The primary structure comprises 251 residues: tRNA-cytidine(32) 2-sulfurtransferase 1 (251 aa).

The short motif at 33 to 38 is the PP-loop motif element; that stretch reads SGGKDS. [4Fe-4S] cluster is bound by residues cysteine 108, cysteine 111, and cysteine 199.

The protein belongs to the TtcA family. Homodimer. Requires Mg(2+) as cofactor. It depends on [4Fe-4S] cluster as a cofactor.

The protein localises to the cytoplasm. It catalyses the reaction cytidine(32) in tRNA + S-sulfanyl-L-cysteinyl-[cysteine desulfurase] + AH2 + ATP = 2-thiocytidine(32) in tRNA + L-cysteinyl-[cysteine desulfurase] + A + AMP + diphosphate + H(+). Its pathway is tRNA modification. In terms of biological role, catalyzes the ATP-dependent 2-thiolation of cytidine in position 32 of tRNA, to form 2-thiocytidine (s(2)C32). The sulfur atoms are provided by the cysteine/cysteine desulfurase (IscS) system. The chain is tRNA-cytidine(32) 2-sulfurtransferase 1 from Francisella tularensis subsp. holarctica (strain FTNF002-00 / FTA).